The chain runs to 331 residues: L-lactate dehydrogenase A chain (331 aa).

NAD(+) contacts are provided by residues Gly29–Lys57 and Arg98. 3 residues coordinate substrate: Arg105, Asn137, and Arg168. Residue Asn137 participates in NAD(+) binding. Residue His192 is the Proton acceptor of the active site. Residue Thr247 coordinates substrate.

Belongs to the LDH/MDH superfamily. LDH family. As to quaternary structure, homotetramer.

The protein resides in the cytoplasm. The catalysed reaction is (S)-lactate + NAD(+) = pyruvate + NADH + H(+). It participates in fermentation; pyruvate fermentation to lactate; (S)-lactate from pyruvate: step 1/1. Interconverts simultaneously and stereospecifically pyruvate and lactate with concomitant interconversion of NADH and NAD(+). The chain is L-lactate dehydrogenase A chain (ldha) from Notothenia neglecta (Yellowbelly rockcod).